Here is a 130-residue protein sequence, read N- to C-terminus: Holo-[acyl-carrier-protein] synthase (130 aa).

Mg(2+) contacts are provided by aspartate 8 and glutamate 62.

This sequence belongs to the P-Pant transferase superfamily. AcpS family. Mg(2+) is required as a cofactor.

Its subcellular location is the cytoplasm. It carries out the reaction apo-[ACP] + CoA = holo-[ACP] + adenosine 3',5'-bisphosphate + H(+). In terms of biological role, transfers the 4'-phosphopantetheine moiety from coenzyme A to a Ser of acyl-carrier-protein. This is Holo-[acyl-carrier-protein] synthase from Variovorax paradoxus (strain S110).